The chain runs to 556 residues: Formate--tetrahydrofolate ligase (556 aa).

Position 65–72 (65–72) interacts with ATP; it reads TPAGEGKT.

This sequence belongs to the formate--tetrahydrofolate ligase family.

It carries out the reaction (6S)-5,6,7,8-tetrahydrofolate + formate + ATP = (6R)-10-formyltetrahydrofolate + ADP + phosphate. The protein operates within one-carbon metabolism; tetrahydrofolate interconversion. This Symbiobacterium thermophilum (strain DSM 24528 / JCM 14929 / IAM 14863 / T) protein is Formate--tetrahydrofolate ligase.